Consider the following 182-residue polypeptide: Aralkylamine dehydrogenase light chain (182 aa).

Residues 1–47 (MRWLDKFGESLSRSVAHKTSRRSVLRSVGKLMVGSAFVLPVLPVARA) constitute a signal peptide (tat-type signal). Cystine bridges form between Cys-75–Cys-140, Cys-81–Cys-113, Cys-88–Cys-171, Cys-90–Cys-138, Cys-91–Cys-135, Cys-98–Cys-129, and Cys-130–Cys-161. Asp-84 contacts substrate. Trp-109 (tryptophylquinone 6'-substrate hemiaminal intermediate) is an active-site residue. Trp-109 carries the post-translational modification Tryptophylquinone. Residues 109 to 160 (WIGTCHNPHDGKDYLISYHDCCGKTACGRCQCNTQTRERPGYEFFLHNDVNW) constitute a cross-link (tryptophan tryptophylquinone (Trp-Trp)). The Proton acceptor role is filled by Asp-128. A substrate-binding site is contributed by 156–158 (NDV).

The protein belongs to the aromatic amine dehydrogenase light chain family. As to quaternary structure, heterotetramer of two light and two heavy chains. Binds two azurin molecules per heterotetramer. Tryptophan tryptophylquinone residue serves as cofactor. Post-translationally, tryptophan tryptophylquinone (TTQ) is formed by oxidation of the indole ring of a tryptophan to form tryptophylquinone followed by covalent cross-linking with another tryptophan residue. In terms of processing, predicted to be exported by the Tat system. The position of the signal peptide cleavage has been experimentally proven.

The protein localises to the periplasm. The catalysed reaction is an aralkylamine + 2 oxidized [azurin] + H2O = an aromatic aldehyde + 2 reduced [azurin] + NH4(+) + 2 H(+). Its activity is regulated as follows. Irreversibly inhibited by phenylhydrazine, hydroxylamine, semicarbazide, hydrazine and aminoguanidine. Reversibly inhibited by isonicotinic acid hydrazide (isoniazid) and isonicotinic acid 2-isopropyl hydrazide (iproniazid). Functionally, oxidizes primary aromatic amines and, more slowly, some long-chain aliphatic amines, but not methylamine or ethylamine. Uses azurin as an electron acceptor to transfer electrons from the reduced tryptophylquinone cofactor. The chain is Aralkylamine dehydrogenase light chain from Alcaligenes faecalis.